The chain runs to 177 residues: Transcriptional repressor NrdR (177 aa).

A zinc finger lies at 3–34 (CLFCQHTDTRVIDSRVSEDGATIRRRRECEAC). In terms of domain architecture, ATP-cone spans 49–139 (PVIIKKDGGR…VYRSFQDVAD (91 aa)).

It belongs to the NrdR family. It depends on Zn(2+) as a cofactor.

Its function is as follows. Negatively regulates transcription of bacterial ribonucleotide reductase nrd genes and operons by binding to NrdR-boxes. In Xylella fastidiosa (strain M23), this protein is Transcriptional repressor NrdR.